A 554-amino-acid chain; its full sequence is Raftlin (554 aa).

Residue Gly-2 is the site of N-myristoyl glycine attachment. A lipid anchor (S-palmitoyl cysteine) is attached at Cys-3. Phosphoserine occurs at positions 183 and 199. Disordered regions lie at residues 192 to 249 (CTLG…NEAG), 441 to 488 (KKRE…DQFS), and 504 to 554 (GRAS…TEAN). Composition is skewed to basic and acidic residues over residues 198-209 (SSLENDTPKAAE) and 475-487 (QAEE…EDQF). Ser-507 and Ser-530 each carry phosphoserine. A compositionally biased stretch (basic and acidic residues) spans 526–542 (HNRDSVALRHSNPRAEA).

Belongs to the raftlin family. As to quaternary structure, interacts with TLR4; the interaction occurs in response to lipopolysaccharide stimulation. Interacts with CLTC; the interaction occurs in response to pathogens. Interacts with AP2A1 and AP2B1. In terms of tissue distribution, expressed in T-cells, B-cells, thymus and spleen (at protein level). Expressed in dendritic cells, macrophages, heart, lung and small intestine.

The protein localises to the cell membrane. It is found in the cytoplasm. Its subcellular location is the membrane raft. It localises to the endosome. The protein resides in the early endosome. Functionally, involved in protein trafficking via association with clathrin and AP2 complex. Upon bacterial lipopolysaccharide stimulation, mediates internalization of TLR4 to endosomes in dendritic cells and macrophages, and internalization of poly(I:C) to TLR3-positive endosomes in myeloid dendritic cells and epithelial cells; resulting in activation of TICAM1-mediated signaling and subsequent IFNB1 production. Involved in T-cell antigen receptor-mediated signaling by regulating tyrosine kinase LCK localization, T-cell dependent antibody production and cytokine secretion. May regulate B-cell antigen receptor-mediated signaling. May play a pivotal role in the formation and/or maintenance of lipid rafts. The polypeptide is Raftlin (Rftn1) (Mus musculus (Mouse)).